A 390-amino-acid polypeptide reads, in one-letter code: MSAESLPSYSVRELNNAIGVLLERGFAPRFVIQATVSRPQVKKGHLWLTLSDGEASITAVAWASKLKQLDFVPADGDGVTVIGKLNFWSARASLAVQVLDMRPSLTTVLRRFETVKAQLLEEGVIDPSRHRKLPAYPNRLAVLTSVPSSALADMLRTAQDRWPLSELLVVPIPVQGEVAPIICGVLNRLAETHHQLGLDAIVIARGGGSREDLMVFDDAEVCRKLATFPLPVVTGLGHEDDLTVADLVADHRAATPTAAMVTLMPSRESAQQTITQRRSRLSEYKRWRLEQANSRLRDRHLLLDALRPEVTLQRRRDQWQQRQQLLRALSPQRWLNRGFAMLNTTNGQPIQSINDISLNEQLQILLKDGVIQAVAKTIQANETSNSKTSP.

This sequence belongs to the XseA family. In terms of assembly, heterooligomer composed of large and small subunits.

It localises to the cytoplasm. The catalysed reaction is Exonucleolytic cleavage in either 5'- to 3'- or 3'- to 5'-direction to yield nucleoside 5'-phosphates.. Bidirectionally degrades single-stranded DNA into large acid-insoluble oligonucleotides, which are then degraded further into small acid-soluble oligonucleotides. This is Exodeoxyribonuclease 7 large subunit from Synechococcus sp. (strain CC9311).